The chain runs to 240 residues: Ribosomal RNA small subunit methyltransferase G (240 aa).

Residues G79, F84, 130–131, and R149 each bind S-adenosyl-L-methionine; that span reads AE.

The protein belongs to the methyltransferase superfamily. RNA methyltransferase RsmG family.

It is found in the cytoplasm. Specifically methylates the N7 position of a guanine in 16S rRNA. This is Ribosomal RNA small subunit methyltransferase G from Desulforamulus reducens (strain ATCC BAA-1160 / DSM 100696 / MI-1) (Desulfotomaculum reducens).